The sequence spans 386 residues: Terpene cyclase 6 (386 aa).

Residues Asp-128, Asn-276, and Ser-280 each contribute to the Mg(2+) site. Residues 128 to 132 carry the D(D/E)XX(D/E) motif motif; sequence DDEID. The NSE motif signature appears at 276-284; that stretch reads NEILSLQKE. A WxxxxxRY motif motif is present at residues 360–367; sequence WSYNCERY. Residues Arg-366 and Tyr-367 each contribute to the (2E,6E)-farnesyl diphosphate site.

This sequence belongs to the terpene synthase family. Homodimer. The cofactor is Mg(2+).

It carries out the reaction (2E,6E)-farnesyl diphosphate + H2O = trichobrasilenol + diphosphate. The enzyme catalyses (2E,6E)-farnesyl diphosphate = alpha-humulene + diphosphate. It catalyses the reaction (2E,6E)-farnesyl diphosphate = (-)-(E)-beta-caryophyllene + diphosphate. The catalysed reaction is (2E,6E)-farnesyl diphosphate = (E)-2-epi-beta-caryophyllene + diphosphate. It carries out the reaction (2E,6E)-farnesyl diphosphate + H2O = (+)-isoafricanol + diphosphate. The enzyme catalyses (2E,6E)-farnesyl diphosphate + H2O = (+)-(2S,3R,9R)-pristinol + diphosphate. It catalyses the reaction (2E,6E)-farnesyl diphosphate = african-3-ene + diphosphate. The catalysed reaction is (2E,6E)-farnesyl diphosphate = african-1-ene + diphosphate. It participates in sesquiterpene biosynthesis. Terpene cyclase that is able to convert FPP into a mixture of sesquiterpene hydrocarbons and alcohols. The main product is trichobrasilenol. Additionally, side products include alpha-humulene, caryophyllene, 2-epi-caryophyllene, african-3-ene, african-1-ene, isoafricanol and pristinol. Does not accept GPP, GGPP, and GFPP as substrates. This Hypocrea atroviridis (Trichoderma atroviride) protein is Terpene cyclase 6.